The chain runs to 214 residues: UPF0111 protein MJ0629 (214 aa).

Belongs to the UPF0111 family.

This is UPF0111 protein MJ0629 from Methanocaldococcus jannaschii (strain ATCC 43067 / DSM 2661 / JAL-1 / JCM 10045 / NBRC 100440) (Methanococcus jannaschii).